Here is a 309-residue protein sequence, read N- to C-terminus: uncharacterized protein (309 aa).

Disordered stretches follow at residues 1 to 94 and 286 to 309; these read IGEV…RQQI and HTRN…PPRG. Residues 30–43 show a composition bias toward pro residues; it reads PAQPPSPAPTPSRT. The segment covering 58-67 has biased composition (basic and acidic residues); the sequence is RSKTPDKRSA. Residues 297-309 show a composition bias toward pro residues; the sequence is KNTPPPLEDPPRG.

This is an uncharacterized protein from Homo sapiens (Human).